Consider the following 4349-residue polypeptide: MEVTSAAAPSTGSSANGVTAAAPFPTIEPERVVEHLAAVCEIALGATRDELEQLGSLLHKARYGETVSRCTRFASDSQNVLYIQKDIANPSAVEAGADPAAPVTYNYTLSTEISSSSTTVSSLVLIKSPQPIDPTRPLTSQIFITNLPGPASLNAGVGEQGTALSPWEVLHSQVHHALVPYFDANTKSQQLANGSRGRADVDAKTGIPVTKKRLNDLELSLLHLQQNVDIPEISLTFHSIVQNVLDDAESRHTRPSLDAIPQIFSQDSTFLNRLQANVNTWIKSIQGITKLTKDPSSNANQEFNTASQEVNFWLSMESALEGIEGQLRSEGVLLTLEILKHAKRFQATVSFTADTGLKEAMDKVQKYNQLMRDFPLDELLSATSLSKAQEAIAQIFGHLNKKLRICPYPIRRALPLVEAISADLDEVLHRLLPGTELVNLDYQQFQTIMQTCDDIFRTWEENVKEFTNVAREVTRRRNEKFIPIKINKKHSELESRIKYVSTFRDNHEQLQRTIINVLGPQATIPGVTETTGSNGIVMEEMGDVDAVEEVKQAWEALHNVDLLDVTDQGKERWVRAENLYNERTTRVENSIIARLRDRLATAKTANEMFRVFSKFNALFVRPKIRGAIQEYQNQLMDHVKQAINGLHERFKQQYGHSETHAMAQLRDLPPVSGAIIWARQIEFQLDGYMRKVEAVLGPDWTMHTEGHKLQEESELFKQKLDTARIYEAWIADVGRRKISISGQLFEIARVRSAGGILELTVNFDPQVITLFKETRNLTWQSYSVPHAVTTVSKDAKRVYPYAVSLMESVRTLSQTLRQISVMGEESVLLFGYRNDVYKLISEGVPLRWESFINSHELFYSDNRQTRPLLPGGTDFGLAKNTESKHGMFIRGFAAAVSVLQQKAVSLNFIHATVEQALKELNTCPYEEAAFHSRLDTIQAAVDQLNLEQYVNLDFWVRGLNSKVQSILLTRLQSAVHAWIEAFEDDTPDDEMRRKVNNNNEEAKPDGPTMKRLVLELAMRNQVIYLDLLLEFARASWFLHLHEWLGIVCNLRKIKATRYQMSLTTTANDEPRFTDLPSECAGLLQRVYVSVEKKLHEVSAYVDKWLQFQSLWDLQSEQVYDALGEQLPRWLQLLQEIRKTRSTFDTQEVSRAFGHLTIDYDQVQTKVNAKYDQWQHEILMKFASRLGNRMREINAEIEKARKHLESQSSDASSTAQAVQFITVVQSCKRNVKTWAPEIDMFRQGQSTLVRQRYQFPNDWLHIEQIDSQWEALKEILEKKSRIVQDQTDALQAKIVAEDKLINERIAEIAAQWNEEKPVSGTIQPDVASATLSSFESRISKLQDDAQMVAKAKEALDIPASPDTSLEATLEEVRDFQSVWSNLSTIWASLNETRDVLWTAVQPRKIRSKVDDLIKSTKEMPSRMRQYAAFEHVQGILRGFLKVNSILSDLKSDAIRERHWHKIYKQIKPQKRFSPSSMTLGDVWDLNLVATEVIVKDIIAQAQGEMVLEEFLKQVRETWQNYALEMVNYQNKIGLIRGWDDLFAKCSENLNSLQAMKHSPYYKEFEEEAVAWEDKLNRVHVLFDVWIDVQRQWVYLEGVFTGNADIKHLLPIESGRFQNINSEFLAVMKKANKSPYVLEVLNIPNVQKSLERLAEMLNKIQKALGEYLEKERVSFPRFYFVGDEDLLEMIGNSNDTLRIAKHFKKMFAGLSGLVMDDETVISGFTSKEGEVVRLKKEISLAKTPKINDWLALLEGGMKSTLAELLAEAVDQYTPIFESETIDREALNGFMDAYPSQIVVLATQVVWTTAVHKSLTTGGETLKAIFDREVRVLRVLADTVLGELEVILRKKCEQQITECVHQRDTIEKLINAKANSTNHYLWQLQMRYVYEPQGEYLDRLYIKMANAKLNYGFEYLGVPERLVRTPLTDRCFLTLTQALCQRLGGSPYGPAGTGKTESVKALGVQLGRFTLVFCCDDTFDFQAMGRIFLGICQVGAWGCFDEFNRLEERILSAVSQEIQNIQLGLKQGVEDDQSQIELVGRHLHVNENTGIFITMNPGYAGRSNLPDNLKKLFRSVAMSKPDKELIAEVMLYSQGFNQAKQLSKQTVPFFDQCSGRLSKQAHYDFGLRALKSVLVSSGGLKRARLGEGSLGAEEVVEPEIIVQSIRETIAPKLIKSDVDIMATIETDCFPGVQYVPANLEALENAIRELAAERHLVVNELWMTKVLQLYQIQKIHHGVMMVGNSGSGKSAAWRLLLDALQKVEGVEGVSHVIDSKVMSKEALYGNLDSTTREWTDGLFTSILRKIVDNLRGEDSKRHWIVFDGDVDPEWVENLNSVLDDNKLLTLPNGERLNLPANVRIMFEVETLKYATLATVSRCGMVWFSEDTVSPTMMVQNYLSTLRSVPFEDLDEDSVATGHTPAKTLAVQSEFASLLHVYLTDENFILPALQRAEGYNHIMEFTTARVLTTLFSLLNKAVRDAIEYNGQHSDFPLESEQIESFISKKLLLALVWALTGDCPLTDRKSFGDDICALANFGSPPLDGNSSLIDFDVTLPKAEWAPWQNQVPSVEVNTHSITQTDVVIPTLDTVRHENVLYSWLAEHKPLLLCGPPGSGKTMTLFSALRKLPNMEVVGLNFSSATTPDLLIKTFEQYCEYKKTLNGVMLSPTQIGRWLVIFCDEINLPAPDKYGTQRAISFLRQLVEHNGFWRTSDKSWVTLDRIQFVGACNPPTDAGRTPMGARFLRHAPLIMVDYPGELSLNQIYGTFNSAVLKIIPSLRGYAEPLTHAMVRFYLESQQRFTPKIQPHYVYSPRELTRWVRGVYEAIRPLEALTIEGLIRIWAHEALRLFQDRLVAEEERQWTDESVRRIALEFFPNIDEEKALGGPILFSNWLSKNYVPVDREQLRDFVKARLKTFCEEEVDVPLILFNDVLEHVLRIDRVFRQPQGHLILIGVSGSGKTTLSRFVAWMNGLKVFQIKVHGKYSAEDFDDDLRDVLRRCGCKGEKICFIMDESNVLDSGFLERMNTLLANAEVPGLFEGDEYAALMTACKEGAQRQNLRLDSPEEMYKWFTQQIVKNLHVVFTMNPPEDGLSSKAATSPALFNRCVLNWFGDWSDQALFQVGHELTQSIDLDRSNFECPDTIPVAYRGLQLPPSHRERVVNSMVHIHYSLQRYNEKLLKQQGKVTFLRPRHFLDFVTQYIKLYNEKREDLEEQQRHLNVGLEKLRDTVDKVRDLRVSLAEKKKQLEQKDAEANEKLQRMVADQREAEQRKNTSLEIQANLEKQEAEVASRKKVVLEDLAKAEPAVEEAKASVSNIKRQHLTEVRSMGNPPQGVRLAMDAVCTLLGHRINDWKAVQGILRKDDFIASILMFDNAKQMTKGLRNKMRNDFLSNPEFTFEKVNRASKACGPLVQWVAAQVNYFDILDRVGPLKIEVEQLEDQALETKAQAKSVQNNIADLEASINTYKTEYAALISETQAIKAEMSRVQFKVDRSVRLLDSLSSERVRWEAGSKSFEIQISTLVGDVLVAAAFLAYSGLYDQTFRKSMMDDWFHQLHLSGIQYKSPNPVTEYLSTADERLGWQENALPVDDLCTENAIILKRFNRYPLIIDPSGRVTEFLQKECKDRRLTVTSFLDDTFTKQLESSLRFGNPILIQDAEHLDPILNHVLNKECQRTGGRVLIQLGKQEIDFSPAFKLYLSTRDPSATFAPDICSRTTFVNFTVTQSSLQTQSLNDVLKSERPDVDERRSNLIKLQGEFKIHLRQLEKRLLQALNESRGNILDDDNVIETLETLKTEAAEISAKMSNTEGVMAEVEEITQQYSIIARSCSAVFAVLEQLHYLNHFYQFSLQYFLDIFQSVLHGNKNLANETDHNARRDVIVHDLFVNTFKRTALGLLQKDRITLGMLLAQASPYKMDKSVIDMILDNRVEGKDLSSHPDDRENAFAQAKKLSAIKDKIDAISTEDWDKFFTEELAENAVPHIWDEKTEAIDQALLSLLLVKLFRMDRFVPAAERFVAQVFGSDIFDIVEDLKQTVTQVSATLPISLVSSPGFDASYKVDNLVERMRVKCTNIAMGSNEGLASADKAISNAAQTGSWVLVKNVHLAPTWLQSLEKRMESLNPHSDFRLFLSMESSPKIPVNLLRASRVLMYEQPAGVRANMKDSMSSLSTRATKSPVERTRLYLLLSFLHAVVQERLRYAPNLGWKGFWEFNDSDYECSAYIVDTWIDGVAGNRTNLAPQNIPWEMLRYLVTETYGGKIDDEGDFKLLSQLVTSFLTPAAYEVDHKLVDGPEGGLVVPSGTSFQDFNAWIHRLPEREPPTYLGLPANAEKLLLGGLGRSLIGNLRKVTELLDEGEQLVTEV.

Positions 1–1907 are stem; that stretch reads MEVTSAAAPS…YIKMANAKLN (1907 aa). Coiled coils occupy residues 459-480, 1178-1215, 1266-1293, 1334-1354, 1560-1577, and 1640-1670; these read WEEN…RNEK, LMKF…STAQ, SQWE…QAKI, ESRI…KEAL, YKEF…LNRV, and NIPN…EKER. AAA stretches follow at residues 1908 to 2133, 2201 to 2459, 2565 to 2814, and 2908 to 3177; these read YGFE…VLVS, NAIR…FTTA, EVNT…WVRG, and TFCE…QGKV. 1946-1953 is an ATP binding site; that stretch reads GPAGTGKT. The stretch at 2194 to 2217 forms a coiled coil; sequence ANLEALENAIRELAAERHLVVNEL. ATP-binding positions include 2239-2246, 2604-2611, and 2946-2953; these read GNSGSGKS, GPPGSGKT, and GVSGSGKT. Coiled-coil stretches lie at residues 3186–3294, 3420–3477, and 3774–3807; these read LDFV…LAKA, GPLK…EMSR, and DNVI…VEEI. The interval 3186 to 3477 is stalk; it reads LDFVTQYIKL…TQAIKAEMSR (292 aa). AAA regions lie at residues 3563 to 3792 and 4001 to 4213; these read LSTA…EISA and AERF…IVDT.

Belongs to the dynein heavy chain family. Consists of at least two heavy chains and a number of intermediate and light chains.

It is found in the cytoplasm. The protein localises to the cytoskeleton. Cytoplasmic dynein acts as a motor for the intracellular retrograde motility of vesicles and organelles along microtubules. Dynein has ATPase activity; the force-producing power stroke is thought to occur on release of ADP. The chain is Dynein heavy chain, cytoplasmic (DHC1) from Fusarium vanettenii (Neocosmospora pisi).